The following is a 301-amino-acid chain: Large ribosomal subunit protein uL18z (301 aa).

It belongs to the universal ribosomal protein uL18 family. As to quaternary structure, component of the large ribosomal subunit (LSU). As to expression, expressed in seedlings, roots, stems, leaves, inflorescences and siliques.

It is found in the cytoplasm. It localises to the nucleus. The protein localises to the nucleolus. Its subcellular location is the nucleoplasm. In terms of biological role, component of the ribosome, a large ribonucleoprotein complex responsible for the synthesis of proteins in the cell. The small ribosomal subunit (SSU) binds messenger RNAs (mRNAs) and translates the encoded message by selecting cognate aminoacyl-transfer RNA (tRNA) molecules. The large subunit (LSU) contains the ribosomal catalytic site termed the peptidyl transferase center (PTC), which catalyzes the formation of peptide bonds, thereby polymerizing the amino acids delivered by tRNAs into a polypeptide chain. The nascent polypeptides leave the ribosome through a tunnel in the LSU and interact with protein factors that function in enzymatic processing, targeting, and the membrane insertion of nascent chains at the exit of the ribosomal tunnel. Seems involved in the regulation of cell proliferation. Essential in leaf polarity establishment, probably having a role for translation in leaf dorsoventral patterning to specify leaf adaxial identity. The sequence is that of Large ribosomal subunit protein uL18z from Arabidopsis thaliana (Mouse-ear cress).